We begin with the raw amino-acid sequence, 247 residues long: Uracil-DNA glycosylase (247 aa).

Catalysis depends on aspartate 83, which acts as the Proton acceptor.

Belongs to the uracil-DNA glycosylase (UDG) superfamily. UNG family.

The protein localises to the cytoplasm. The enzyme catalyses Hydrolyzes single-stranded DNA or mismatched double-stranded DNA and polynucleotides, releasing free uracil.. Functionally, excises uracil residues from the DNA which can arise as a result of misincorporation of dUMP residues by DNA polymerase or due to deamination of cytosine. This Deinococcus radiodurans (strain ATCC 13939 / DSM 20539 / JCM 16871 / CCUG 27074 / LMG 4051 / NBRC 15346 / NCIMB 9279 / VKM B-1422 / R1) protein is Uracil-DNA glycosylase.